The chain runs to 259 residues: GTP-binding protein RHO4 (259 aa).

59–66 (GDGATGKT) serves as a coordination point for GTP. Residues 81–89 (YVPTIFENY) carry the Effector region motif. Residues 107–111 (DTAGQ) and 165–168 (LKSD) each bind GTP. Cys256 is modified (cysteine methyl ester). Residue Cys256 is the site of S-geranylgeranyl cysteine attachment. The propeptide at 257-259 (VVL) is removed in mature form.

Belongs to the small GTPase superfamily. Rho family.

It is found in the cell membrane. The chain is GTP-binding protein RHO4 (RHO4) from Eremothecium gossypii (strain ATCC 10895 / CBS 109.51 / FGSC 9923 / NRRL Y-1056) (Yeast).